The sequence spans 686 residues: Acyl-CoA synthetase short-chain family member 3, mitochondrial (686 aa).

A mitochondrion-targeting transit peptide spans 1 to 29 (MKPSWLQCHKVTSAGGLGGPLPGSSPARG). 227 to 230 (EPGR) provides a ligand contact to CoA. Residues 425–427 (GER) and 446–451 (DHWWQT) contribute to the ATP site. Lysine 518 bears the N6-succinyllysine mark. Residue lysine 524 is modified to N6-acetyllysine. ATP contacts are provided by aspartate 539, arginine 554, and arginine 565. Arginine 624 lines the CoA pocket.

Belongs to the ATP-dependent AMP-binding enzyme family.

Its subcellular location is the mitochondrion matrix. It catalyses the reaction acetate + ATP + CoA = acetyl-CoA + AMP + diphosphate. The enzyme catalyses propanoate + ATP + CoA = propanoyl-CoA + AMP + diphosphate. The catalysed reaction is butanoate + ATP + CoA = butanoyl-CoA + AMP + diphosphate. Its function is as follows. Catalyzes the synthesis of acetyl-CoA from short-chain fatty acids. Propionate is the preferred substrate but can also utilize acetate and butyrate with a much lower affinity. This is Acyl-CoA synthetase short-chain family member 3, mitochondrial (ACSS3) from Pongo abelii (Sumatran orangutan).